We begin with the raw amino-acid sequence, 144 residues long: Large-conductance mechanosensitive channel (144 aa).

Helical transmembrane passes span 16-36 (VIDLAVGVIIGAAFGKIVDSV) and 86-106 (GNFLTIVVNFVILAFIIFLMV).

Belongs to the MscL family. As to quaternary structure, homopentamer.

The protein localises to the cell inner membrane. Channel that opens in response to stretch forces in the membrane lipid bilayer. May participate in the regulation of osmotic pressure changes within the cell. The polypeptide is Large-conductance mechanosensitive channel (Cupriavidus pinatubonensis (strain JMP 134 / LMG 1197) (Cupriavidus necator (strain JMP 134))).